A 245-amino-acid chain; its full sequence is tRNA pseudouridine synthase A (245 aa).

Residue Asp52 is the Nucleophile of the active site. Tyr111 is a substrate binding site.

Belongs to the tRNA pseudouridine synthase TruA family. As to quaternary structure, homodimer.

It catalyses the reaction uridine(38/39/40) in tRNA = pseudouridine(38/39/40) in tRNA. Its function is as follows. Formation of pseudouridine at positions 38, 39 and 40 in the anticodon stem and loop of transfer RNAs. The sequence is that of tRNA pseudouridine synthase A from Rhodopseudomonas palustris (strain BisB18).